We begin with the raw amino-acid sequence, 245 residues long: tRNA1(Val) (adenine(37)-N6)-methyltransferase (245 aa).

Belongs to the methyltransferase superfamily. tRNA (adenine-N(6)-)-methyltransferase family.

It localises to the cytoplasm. It carries out the reaction adenosine(37) in tRNA1(Val) + S-adenosyl-L-methionine = N(6)-methyladenosine(37) in tRNA1(Val) + S-adenosyl-L-homocysteine + H(+). Functionally, specifically methylates the adenine in position 37 of tRNA(1)(Val) (anticodon cmo5UAC). This Salmonella paratyphi A (strain ATCC 9150 / SARB42) protein is tRNA1(Val) (adenine(37)-N6)-methyltransferase.